Consider the following 679-residue polypeptide: Protein SQS1 (679 aa).

4 disordered regions span residues 1–40 (MAKR…RNNS), 76–161 (DSMR…PEPK), 242–315 (VSEE…PGFG), and 391–419 (PEEP…QDDE). Over residues 16–32 (RGRRGGRAGHRGRGGRR) the composition is skewed to basic residues. A compositionally biased stretch (acidic residues) spans 146-156 (GDDEPEGEYEP). A compositionally biased stretch (acidic residues) spans 406-419 (ENYDDSEEDEQDDE). The R3H domain occupies 514–576 (GFHIENIIDE…HTRVLVQKGG (63 aa)). The G-patch domain maps to 633 to 679 (QDNVGRRLLEKLGWTHGEGLGVHGNKGISEPLMARVKKNRSGLRYTE).

This sequence belongs to the SQS1 family.

The protein resides in the cytoplasm. It localises to the nucleus. Functionally, may be involved in splicing. The chain is Protein SQS1 (SQS1) from Eremothecium gossypii (strain ATCC 10895 / CBS 109.51 / FGSC 9923 / NRRL Y-1056) (Yeast).